Reading from the N-terminus, the 875-residue chain is Lysine-specific demethylase 7A (875 aa).

Residues 5-56 (PLYCVCRQPYDVNRFMIECDICKDWFHGSCVQVVEHHAADIDVYHCPNCEPI) form a PHD-type zinc finger. In terms of domain architecture, JmjC spans 197–353 (FSDTRMSNLV…MQLRCYEMER (157 aa)). T246 contacts substrate. The Fe cation site is built by H249 and D251. A substrate-binding site is contributed by K266. H321 provides a ligand contact to Fe cation. Disordered regions lie at residues 442–506 (EDDS…SRKL), 629–710 (SQGE…NTDC), and 742–820 (QGNG…ATAK). Residues 448–462 (AVKTQGSAECSLSRS) show a composition bias toward polar residues. Residues 478 to 505 (QDHHHHRRRHHHHHHHHHHHHHHHHSRK) are compositionally biased toward basic residues. The span at 650-663 (SDSKAGDSAEKCSL) shows a compositional bias: basic and acidic residues. Basic residues predominate over residues 688 to 697 (SHRHSHHKQA). Residues 742–762 (QGNGSSTSSSSDMWDSSEPCS) show a composition bias toward low complexity.

It belongs to the JHDM1 histone demethylase family. JHDM1D subfamily. The cofactor is Fe(2+). Predominantly expressed in brain.

It localises to the nucleus. Histone demethylase required for brain development. Specifically demethylates dimethylated 'Lys-9' and 'Lys-27' (H3K9me2 and H3K27me2, respectively) of histone H3 and monomethylated histone H4 'Lys-20' residue (H4K20Me1), thereby playing a central role in histone code. The sequence is that of Lysine-specific demethylase 7A (kdm7a) from Danio rerio (Zebrafish).